The sequence spans 271 residues: Small ribosomal subunit protein uS9m (271 aa).

A mitochondrion-targeting transit peptide spans 1-11 (MFRSLAKLRCF). Residues 251-271 (KVERKKTGQPKARKKYTWVKR) are disordered. A compositionally biased stretch (basic residues) spans 252–271 (VERKKTGQPKARKKYTWVKR).

It belongs to the universal ribosomal protein uS9 family. As to quaternary structure, component of the mitochondrial small ribosomal subunit (mt-SSU). Mature yeast 74S mitochondrial ribosomes consist of a small (37S) and a large (54S) subunit. The 37S small subunit contains a 15S ribosomal RNA (15S mt-rRNA) and at least 32 different proteins. The 54S large subunit contains a 21S rRNA (21S mt-rRNA) and at least 45 different proteins.

The protein resides in the mitochondrion. Its function is as follows. Component of the mitochondrial ribosome (mitoribosome), a dedicated translation machinery responsible for the synthesis of mitochondrial genome-encoded proteins, including at least some of the essential transmembrane subunits of the mitochondrial respiratory chain. The mitoribosomes are attached to the mitochondrial inner membrane and translation products are cotranslationally integrated into the membrane. This is Small ribosomal subunit protein uS9m (mrps9) from Schizosaccharomyces pombe (strain 972 / ATCC 24843) (Fission yeast).